A 200-amino-acid chain; its full sequence is Large ribosomal subunit protein uL4 (200 aa).

The segment at 42-65 is disordered; sequence TRAQKTRSDVSGGGAKPWRQKGTG.

The protein belongs to the universal ribosomal protein uL4 family. Part of the 50S ribosomal subunit.

In terms of biological role, one of the primary rRNA binding proteins, this protein initially binds near the 5'-end of the 23S rRNA. It is important during the early stages of 50S assembly. It makes multiple contacts with different domains of the 23S rRNA in the assembled 50S subunit and ribosome. Its function is as follows. Forms part of the polypeptide exit tunnel. This is Large ribosomal subunit protein uL4 from Photobacterium profundum (strain SS9).